The primary structure comprises 294 residues: Metallophosphoesterase MPPED2 (294 aa).

Residues D65, H67, D86, N117, and H213 each coordinate Mn(2+). 117-118 (NH) provides a ligand contact to GMP. Residues 225–226 (KE) and 252–255 (GIHE) contribute to the GMP site. H254 serves as a coordination point for Mn(2+).

Belongs to the UPF0046 family. As to quaternary structure, homodimer. Mn(2+) serves as cofactor. The cofactor is Co(2+).

Its activity is regulated as follows. Inhibited by nmolar levels of AMP and GMP. Functionally, displays low metallophosphoesterase activity (in vitro). May play a role in the development of the nervous system. This Mus musculus (Mouse) protein is Metallophosphoesterase MPPED2 (Mpped2).